Consider the following 193-residue polypeptide: Small ribosomal subunit protein eS1 (193 aa).

The protein belongs to the eukaryotic ribosomal protein eS1 family.

The protein is Small ribosomal subunit protein eS1 of Methanobrevibacter smithii (strain ATCC 35061 / DSM 861 / OCM 144 / PS).